A 282-amino-acid polypeptide reads, in one-letter code: Nucleotide-binding protein in ptsN-ptsO intergenic region (282 aa).

8 to 15 (GRSGSGKS) is an ATP binding site. 56–59 (DVRN) lines the GTP pocket.

Belongs to the RapZ-like family.

Displays ATPase and GTPase activities. The protein is Nucleotide-binding protein in ptsN-ptsO intergenic region of Shewanella violacea.